The following is a 521-amino-acid chain: Cytochrome P450 monooxygenase ABA2 (521 aa).

A helical transmembrane segment spans residues 15–35 (AGHLGMAVTFTILVAFTIHVL). The N-linked (GlcNAc...) asparagine glycan is linked to asparagine 366. Cysteine 458 is a binding site for heme.

Belongs to the cytochrome P450 family. Heme serves as cofactor.

The protein resides in the membrane. It participates in hormone biosynthesis. Its function is as follows. Cytochrome P450 monooxygenase involved in the biosynthesis of abscisic acid (ABA), a phytohormone that acts antagonistically toward salicylic acid (SA), jasmonic acid (JA) and ethylene (ETH) signaling, to impede plant defense responses. During pathogen-host interaction, ABA plays a dual role in disease severity by increasing plant susceptibility and accelerating pathogenesis in the fungus itself. The first step of the pathway catalyzes the reaction from farnesyl diphosphate to alpha-ionylideneethane performed by the alpha-ionylideneethane synthase ABA3 via a three-step reaction mechanism involving 2 neutral intermediates, beta-farnesene and allofarnesene. The cytochrome P450 monooxygenase ABA1 might then be involved in the conversion of alpha-ionylideneethane to alpha-ionylideneacetic acid. Alpha-ionylideneacetic acid is further converted to abscisic acid in 2 steps involving the cytochrome P450 monooxygenase ABA2 and the short-chain dehydrogenase/reductase ABA4, via the intermediates 1'-deoxy-ABA or 1',4'-trans-diol-ABA, depending on the order of action of these 2 enzymes. ABA2 is responsible for the hydroxylation of carbon atom C-1' and ABA4 might be involved in the oxidation of the C-4' carbon atom. The polypeptide is Cytochrome P450 monooxygenase ABA2 (Pyricularia oryzae (strain 70-15 / ATCC MYA-4617 / FGSC 8958) (Rice blast fungus)).